The following is a 253-amino-acid chain: Decarboxylase DEC1 (253 aa).

Catalysis depends on Lys121, which acts as the Schiff-base intermediate with acetoacetate.

The protein belongs to the ADC family.

It functions in the pathway mycotoxin biosynthesis. Its function is as follows. Decarboxylase; part of the Tox1B locus, one of the 2 loci that mediate the biosynthesis of T-toxin, a family of linear polyketides 37 to 45 carbons in length, of which the major component is 41 carbons, and which leads to high virulence to maize. One of the PKSs (PKS1 or PKS2) could synthesize a precursor, used subsequently by the other PKS as starter unit, to add additional carbons. Variability in the length of the final carbon backbone C35-47 could be achieved by varying the number of condensation cycles, or use of different starter or extender units or might be due to decarboxylation of the penultimate product, catalyzed by DEC1. Additional proteins are required for the biosynthesis of T-toxin, including oxidoreductases RED1, RED2, RED3, LAM1 and OXI1, as well as esterase TOX9. This Cochliobolus heterostrophus (strain C4 / ATCC 48331 / race T) (Southern corn leaf blight fungus) protein is Decarboxylase DEC1.